Here is a 192-residue protein sequence, read N- to C-terminus: Ion-translocating oxidoreductase complex subunit B (192 aa).

The segment at 1-26 (MNAIWIAVVAVSLLGLAFGAILGYAS) is hydrophobic. Residues 32–91 (EDDPVVEKIDEILPQSQCGQCGYPGCRPYAEAIGSQGEKINRCAPGGEAVMLKIATLLNV) enclose the 4Fe-4S domain. 12 residues coordinate [4Fe-4S] cluster: Cys-49, Cys-52, Cys-57, Cys-74, Cys-117, Cys-120, Cys-123, Cys-127, Cys-147, Cys-150, Cys-153, and Cys-157. 2 consecutive 4Fe-4S ferredoxin-type domains span residues 108-137 (MLAV…GATR) and 138-167 (AMHT…LRPV).

The protein belongs to the 4Fe4S bacterial-type ferredoxin family. RnfB subfamily. The complex is composed of six subunits: RnfA, RnfB, RnfC, RnfD, RnfE and RnfG. The cofactor is [4Fe-4S] cluster.

Its subcellular location is the cell inner membrane. Functionally, part of a membrane-bound complex that couples electron transfer with translocation of ions across the membrane. In Citrobacter koseri (strain ATCC BAA-895 / CDC 4225-83 / SGSC4696), this protein is Ion-translocating oxidoreductase complex subunit B.